Here is a 351-residue protein sequence, read N- to C-terminus: Peptide chain release factor 1 (351 aa).

The residue at position 229 (glutamine 229) is an N5-methylglutamine.

It belongs to the prokaryotic/mitochondrial release factor family. Methylated by PrmC. Methylation increases the termination efficiency of RF1.

The protein resides in the cytoplasm. Functionally, peptide chain release factor 1 directs the termination of translation in response to the peptide chain termination codons UAG and UAA. The polypeptide is Peptide chain release factor 1 (Cereibacter sphaeroides (strain ATCC 17029 / ATH 2.4.9) (Rhodobacter sphaeroides)).